Consider the following 505-residue polypeptide: ATP synthase subunit alpha (505 aa).

Residue Gly170–Thr177 coordinates ATP.

Belongs to the ATPase alpha/beta chains family. In terms of assembly, F-type ATPases have 2 components, CF(1) - the catalytic core - and CF(0) - the membrane proton channel. CF(1) has five subunits: alpha(3), beta(3), gamma(1), delta(1), epsilon(1). CF(0) has four main subunits: a(1), b(1), b'(1) and c(9-12).

It is found in the cellular thylakoid membrane. It carries out the reaction ATP + H2O + 4 H(+)(in) = ADP + phosphate + 5 H(+)(out). Functionally, produces ATP from ADP in the presence of a proton gradient across the membrane. The alpha chain is a regulatory subunit. The chain is ATP synthase subunit alpha from Prochlorococcus marinus (strain MIT 9313).